Here is a 131-residue protein sequence, read N- to C-terminus: ATP synthase lipid-binding protein, mitochondrial (131 aa).

Residues 1-56 (MLSAARLIAPAARSAIFSNAAVVRPLAAVSTQTQLVPAAPAQLSAVRSFQTTSVTK) constitute a mitochondrion transit peptide. Residues 72 to 92 (VGVAGSGAGIGTVFGSLIIGY) traverse the membrane as a helical segment. Lysine 99 bears the N6,N6,N6-trimethyllysine mark. The helical transmembrane segment at 107–127 (ILGFALSEAMGLFCLMMAFLL) threads the bilayer.

This sequence belongs to the ATPase C chain family. In terms of assembly, F-type ATPases have 2 components, CF(1) - the catalytic core - and CF(0) - the membrane proton channel. CF(1) has five subunits: alpha(3), beta(3), gamma(1), delta(1), epsilon(1). CF(0) has three main subunits: a, b and c. In terms of processing, trimethylated by ATPSCKMT at Lys-99. Methylation may be required for proper incorporation of the C subunit into the ATP synthase complex and mitochondrial respiration.

The protein resides in the mitochondrion membrane. Its function is as follows. Mitochondrial membrane ATP synthase (F(1)F(0) ATP synthase or Complex V) produces ATP from ADP in the presence of a proton gradient across the membrane which is generated by electron transport complexes of the respiratory chain. F-type ATPases consist of two structural domains, F(1) - containing the extramembraneous catalytic core and F(0) - containing the membrane proton channel, linked together by a central stalk and a peripheral stalk. During catalysis, ATP synthesis in the catalytic domain of F(1) is coupled via a rotary mechanism of the central stalk subunits to proton translocation. Part of the complex F(0) domain. A homomeric c-ring of probably 10 subunits is part of the complex rotary element. The sequence is that of ATP synthase lipid-binding protein, mitochondrial from Manduca sexta (Tobacco hawkmoth).